Here is a 479-residue protein sequence, read N- to C-terminus: Ammonium transporter 3 member 2 (479 aa).

11 consecutive transmembrane segments (helical) span residues 34 to 54, 59 to 79, 139 to 159, 164 to 184, 202 to 222, 237 to 257, 272 to 292, 297 to 317, 321 to 341, 355 to 375, and 407 to 427; these read VAATVVGLQSVPGLVVLYGGV, WAVNSAFMALYAFAAVWICWV, VVYFQCVFAAITLILVAGSLL, FLAWMIFVPLWLTFSYTVGAF, GGYVIHVSAGIAGFTAAYWVG, ILFTLTGAGLLWMGWAGFNGG, NTNICTAMSLIVWTCLDVIFF, VVGAVQGMITGLVCITPAAGV, WAALVMGVLAGSIPWYTMMIL, LGVFHTHGVAGLLGGLLTGLF, and IAGGLFVVAWNVAVTSLICLA.

It belongs to the ammonia transporter channel (TC 1.A.11.2) family.

It localises to the membrane. Involved in ammonium transport. The sequence is that of Ammonium transporter 3 member 2 (AMT3-2) from Oryza sativa subsp. japonica (Rice).